We begin with the raw amino-acid sequence, 1248 residues long: Structural polyprotein (1248 aa).

The segment covering 1–10 (MEFIPTQTFY) has biased composition (polar residues). The tract at residues 1 to 104 (MEFIPTQTFY…KKKKPGRRER (104 aa)) is disordered. Over residues 22-44 (RPTIQVIRPRPRPQRQAGQLAQL) the composition is skewed to low complexity. The tract at residues 36–68 (RQAGQLAQLISAVNKLTMRAVPQQKPRRNRKNK) is host transcription inhibition. Residues 60 to 72 (KPRRNRKNKKQKQ) are compositionally biased toward basic residues. The Nuclear localization signal signature appears at 61–99 (PRRNRKNKKQKQKQQAPQNNTNQKKQPPKKKPAQKKKKP). Positions 73–85 (KQQAPQNNTNQKK) are enriched in low complexity. Positions 84 to 114 (KKQPPKKKPAQKKKKPGRRERMCMKIENDCI) are binding to the viral RNA. Over residues 86 to 101 (QPPKKKPAQKKKKPGR) the composition is skewed to basic residues. The interval 99 to 113 (PGRRERMCMKIENDC) is ribosome-binding. Cys-113 and Cys-128 form a disulfide bridge. Residues 113-261 (CIFEVKHEGK…KITPEGAEEW (149 aa)) form the Peptidase S3 domain. His-139 serves as the catalytic Charge relay system. A Nuclear export signal motif is present at residues 144–154 (IDNADLAKLAF). An interaction with spike glycoprotein E2 region spans residues 155-160 (KRSSKY). Residue Asp-161 is the Charge relay system of the active site. A dimerization of the capsid protein region spans residues 183-193 (PEGYYNWHHGA). Ser-213 serves as the catalytic Charge relay system. The interval 219–223 (DNKGR) is dimerization of the capsid protein. Residues 262 to 274 (SLAIPVMCLLANT) form a functions as an uncleaved signal peptide for the precursor of protein E3/E2 region. Residues 262–692 (SLAIPVMCLL…YYYELYPTMT (431 aa)) lie on the Extracellular side of the membrane. 9 cysteine pairs are disulfide-bonded: Cys-269–Cys-278, Cys-283–Cys-287, Cys-286–Cys-318, Cys-344–Cys-450, Cys-347–Cys-353, Cys-416–Cys-430, Cys-478–Cys-591, Cys-526–Cys-550, and Cys-528–Cys-545. Residue Asn-273 is glycosylated (N-linked (GlcNAc...) asparagine; by host). Interaction with host Mxra8 receptor regions lie at residues 351-354 (HSCH) and 387-389 (HDW). Interaction with host Mxra8 receptor stretches follow at residues 509 to 512 (QSGN) and 541 to 547 (VINNCKV). Residues Asn-588 and Asn-670 are each glycosylated (N-linked (GlcNAc...) asparagine; by host). A helical transmembrane segment spans residues 693–713 (VVVVSVASFILLSMVGMAVGM). At 714–748 (CMCARRRCITPYELTPGATVPFLLSLICCIRTAKA) the chain is on the cytoplasmic side. The interaction with the capsid protein stretch occupies residues 716–720 (CARRR). S-palmitoyl cysteine; by host attachment occurs at residues Cys-721, Cys-741, and Cys-742. Residues 721-741 (CITPYELTPGATVPFLLSLIC) are transient transmembrane before p62-6K protein processing. A disulfide bond links Cys-721 and Cys-742. The Extracellular segment spans residues 749–763 (ATYQEAAVYLWNEQQ). A helical transmembrane segment spans residues 764-784 (PLFWLQALIPLAALIVLCNCL). Over 785–795 (RLLPCCCKTLA) the chain is Cytoplasmic. A helical transmembrane segment spans residues 796 to 816 (FLAVMSIGAHTVSAYEHVTVI). The Extracellular segment spans residues 817–1224 (PNTVGVPYKT…AMSWVQKITG (408 aa)). 4 cysteine pairs are disulfide-bonded: Cys-858–Cys-923, Cys-871–Cys-903, Cys-872–Cys-905, and Cys-877–Cys-887. The E1 fusion peptide loop stretch occupies residues 893-910 (VYPFMWGGAYCFCDAENT). Asn-950 and Asn-1079 each carry an N-linked (GlcNAc...) asparagine; by host glycan. Disulfide bonds link Cys-1068-Cys-1080, Cys-1110-Cys-1185, Cys-1115-Cys-1189, and Cys-1137-Cys-1179. A helical transmembrane segment spans residues 1225-1245 (GVGLVVAVAALILIVVLCVSF). Residue Cys-1242 is the site of S-palmitoyl cysteine; by host attachment. Residue Cys-1242 is the site of S-stearoyl cysteine; by host attachment. The Cytoplasmic portion of the chain corresponds to 1246 to 1248 (SRH).

It belongs to the alphavirus structural polyprotein family. Homodimer. Homomultimer. Interacts with host karyopherin KPNA4; this interaction allows the nuclear import of the viral capsid protein. Interacts with spike glycoprotein E2. Interacts with host IRAK1; the interaction leads to inhibition of IRAK1-dependent signaling. In terms of assembly, the precursor of protein E3/E2 and E1 form a heterodimer shortly after synthesis. As to quaternary structure, interacts with spike glycoprotein E2. The precursor of protein E3/E2 and E1 form a heterodimer shortly after synthesis. Processing of the precursor of protein E3/E2 into E2 and E3 results in a heterodimer of the spike glycoproteins E2 and E1. Spike at virion surface are constituted of three E2-E1 heterodimers. After target cell attachment and endocytosis, E1 changes conformation to form homotrimers. Interacts with 6K protein. Interacts with host MXRA8; this interaction mediates virus entry. The interaction involves 2 adjacent E2-E1 heterodimers. Interacts with spike glycoprotein E1. Processing of the precursor of protein E3/E2 into E2 and E3 results in a heterodimer of the spike glycoproteins E2 and E1. Spike at virion surface are constituted of a trimer of E2-E1 heterodimers. Interacts with 6K protein. Interacts with host MXRA8; this interaction mediates virus entry. The interaction involves 2 adjacent E2-E1 heterodimers. In terms of assembly, oligomer. Interacts with spike glycoprotein E1. Interacts with spike glycoprotein E2. Specific enzymatic cleavages in vivo yield mature proteins. Capsid protein is auto-cleaved during polyprotein translation, unmasking a signal peptide at the N-terminus of the precursor of E3/E2. The remaining polyprotein is then targeted to the host endoplasmic reticulum, where host signal peptidase cleaves it into pE2, 6K and E1 proteins. pE2 is further processed to mature E3 and E2 by host furin in trans-Golgi vesicle. Post-translationally, palmitoylated via thioester bonds. These palmitoylations may induce disruption of the C-terminus transmembrane. This would result in the reorientation of E2 C-terminus from lumenal to cytoplasmic side. In terms of processing, N-glycosylated. Palmitoylated via thioester bonds.

It localises to the virion. Its subcellular location is the host cytoplasm. The protein resides in the host cell membrane. The protein localises to the host nucleus. It is found in the virion membrane. It localises to the host Golgi apparatus. Its subcellular location is the host trans-Golgi network. The protein resides in the host endoplasmic reticulum. It catalyses the reaction Autocatalytic release of the core protein from the N-terminus of the togavirus structural polyprotein by hydrolysis of a -Trp-|-Ser- bond.. In terms of biological role, forms an icosahedral capsid with a T=4 symmetry composed of 240 copies of the capsid protein surrounded by a lipid membrane through which penetrate 80 spikes composed of trimers of E1-E2 heterodimers. The capsid protein binds to the viral RNA genome at a site adjacent to a ribosome binding site for viral genome translation following genome release. Possesses a protease activity that results in its autocatalytic cleavage from the nascent structural protein. Following its self-cleavage, the capsid protein transiently associates with ribosomes, and within several minutes the protein binds to viral RNA and rapidly assembles into icosahedric core particles. The resulting nucleocapsid eventually associates with the cytoplasmic domain of the spike glycoprotein E2 at the cell membrane, leading to budding and formation of mature virions. In case of infection, new virions attach to target cells and after clathrin-mediated endocytosis their membrane fuses with the host endosomal membrane. This leads to the release of the nucleocapsid into the cytoplasm, followed by an uncoating event necessary for the genomic RNA to become accessible. The uncoating might be triggered by the interaction of capsid proteins with ribosomes. Binding of ribosomes would release the genomic RNA since the same region is genomic RNA-binding and ribosome-binding. Specifically inhibits interleukin-1 receptor-associated kinase 1/IRAK1-dependent signaling during viral entry, representing a means by which the alphaviruses may evade innate immune detection and activation prior to viral gene expression. Degrades host cyclic GMP-AMP synthase (CGAS) thereby inhibiting the cGAS-STING pathway. Functionally, provides the signal sequence for the translocation of the precursor of protein E3/E2 to the host endoplasmic reticulum. Furin-cleaved E3 remains associated with spike glycoprotein E1 and mediates pH protection of the latter during the transport via the secretory pathway. After virion release from the host cell, the assembly protein E3 is gradually released in the extracellular space. Its function is as follows. Plays a role in viral attachment to target host cell, by binding to the cell receptor MXRA8. Synthesized as a p62 precursor which is processed by furin at the cell membrane just before virion budding, giving rise to E2-E1 heterodimer. The p62-E1 heterodimer is stable, whereas E2-E1 is unstable and dissociate at low pH. p62 is processed at the last step, presumably to avoid E1 fusion activation before its final export to cell surface. E2 C-terminus contains a transitory transmembrane that would be disrupted by palmitoylation, resulting in reorientation of the C-terminal tail from lumenal to cytoplasmic side. This step is critical since E2 C-terminus is involved in budding by interacting with capsid proteins. This release of E2 C-terminus in cytoplasm occurs lately in protein export, and precludes premature assembly of particles at the endoplasmic reticulum membrane. Acts as a viroporin that participates in virus glycoprotein processing and transport to the plasma membrane, cell permeabilization and budding of viral particles. Disrupts the calcium homeostasis of the cell, probably at the endoplasmic reticulum level. This leads to cytoplasmic calcium elevation. Because of its lipophilic properties, the 6K protein is postulated to influence the selection of lipids that interact with the transmembrane domains of the glycoproteins, which, in turn, affects the deformability of the bilayer required for the extreme curvature that occurs as budding proceeds. Present in low amount in virions, about 3% compared to viral glycoproteins. In terms of biological role, class II viral fusion protein. Fusion activity is inactive as long as E1 is bound to E2 in mature virion. After virus attachment to target cell and endocytosis, acidification of the endosome induce dissociation of E1/E2 heterodimer and concomitant trimerization of the E1 subunits. This E1 trimer is fusion active, and promotes release of viral nucleocapsid in cytoplasm after endosome and viral membrane fusion. Efficient fusion requires the presence of cholesterol and sphingolipid in the target membrane. In Chikungunya virus (strain S27-African prototype) (CHIKV), this protein is Structural polyprotein.